Here is a 430-residue protein sequence, read N- to C-terminus: Serine--tRNA ligase (430 aa).

L-serine is bound at residue 237–239; the sequence is TAE. 268 to 270 contacts ATP; it reads RSE. An L-serine-binding site is contributed by Glu-291. Residue 355–358 participates in ATP binding; sequence EISS. Ser-391 is an L-serine binding site.

The protein belongs to the class-II aminoacyl-tRNA synthetase family. Type-1 seryl-tRNA synthetase subfamily. In terms of assembly, homodimer. The tRNA molecule binds across the dimer.

The protein localises to the cytoplasm. It catalyses the reaction tRNA(Ser) + L-serine + ATP = L-seryl-tRNA(Ser) + AMP + diphosphate + H(+). The enzyme catalyses tRNA(Sec) + L-serine + ATP = L-seryl-tRNA(Sec) + AMP + diphosphate + H(+). It functions in the pathway aminoacyl-tRNA biosynthesis; selenocysteinyl-tRNA(Sec) biosynthesis; L-seryl-tRNA(Sec) from L-serine and tRNA(Sec): step 1/1. Its function is as follows. Catalyzes the attachment of serine to tRNA(Ser). Is also able to aminoacylate tRNA(Sec) with serine, to form the misacylated tRNA L-seryl-tRNA(Sec), which will be further converted into selenocysteinyl-tRNA(Sec). The protein is Serine--tRNA ligase of Escherichia coli O139:H28 (strain E24377A / ETEC).